The following is a 206-amino-acid chain: Large ribosomal subunit protein bL25 (206 aa).

Belongs to the bacterial ribosomal protein bL25 family. CTC subfamily. Part of the 50S ribosomal subunit; part of the 5S rRNA/L5/L18/L25 subcomplex. Contacts the 5S rRNA. Binds to the 5S rRNA independently of L5 and L18.

Its function is as follows. This is one of the proteins that binds to the 5S RNA in the ribosome where it forms part of the central protuberance. The polypeptide is Large ribosomal subunit protein bL25 (Paraburkholderia phytofirmans (strain DSM 17436 / LMG 22146 / PsJN) (Burkholderia phytofirmans)).